The chain runs to 140 residues: Nucleoside diphosphate kinase (140 aa).

ATP-binding residues include K11, F59, R87, T93, R104, and N114. Catalysis depends on H117, which acts as the Pros-phosphohistidine intermediate.

This sequence belongs to the NDK family. As to quaternary structure, homotetramer. Mg(2+) is required as a cofactor.

It localises to the cytoplasm. It carries out the reaction a 2'-deoxyribonucleoside 5'-diphosphate + ATP = a 2'-deoxyribonucleoside 5'-triphosphate + ADP. The catalysed reaction is a ribonucleoside 5'-diphosphate + ATP = a ribonucleoside 5'-triphosphate + ADP. Major role in the synthesis of nucleoside triphosphates other than ATP. The ATP gamma phosphate is transferred to the NDP beta phosphate via a ping-pong mechanism, using a phosphorylated active-site intermediate. The protein is Nucleoside diphosphate kinase of Brucella anthropi (strain ATCC 49188 / DSM 6882 / CCUG 24695 / JCM 21032 / LMG 3331 / NBRC 15819 / NCTC 12168 / Alc 37) (Ochrobactrum anthropi).